A 431-amino-acid chain; its full sequence is Enolase (431 aa).

Gln167 lines the (2R)-2-phosphoglycerate pocket. Residue Glu209 is the Proton donor of the active site. 3 residues coordinate Mg(2+): Asp246, Glu289, and Asp316. (2R)-2-phosphoglycerate-binding residues include Lys341, Arg370, Ser371, and Lys392. Lys341 serves as the catalytic Proton acceptor.

The protein belongs to the enolase family. Component of the RNA degradosome, a multiprotein complex involved in RNA processing and mRNA degradation. Requires Mg(2+) as cofactor.

The protein localises to the cytoplasm. The protein resides in the secreted. Its subcellular location is the cell surface. The catalysed reaction is (2R)-2-phosphoglycerate = phosphoenolpyruvate + H2O. It functions in the pathway carbohydrate degradation; glycolysis; pyruvate from D-glyceraldehyde 3-phosphate: step 4/5. Its function is as follows. Catalyzes the reversible conversion of 2-phosphoglycerate (2-PG) into phosphoenolpyruvate (PEP). It is essential for the degradation of carbohydrates via glycolysis. The sequence is that of Enolase from Chromohalobacter salexigens (strain ATCC BAA-138 / DSM 3043 / CIP 106854 / NCIMB 13768 / 1H11).